Consider the following 100-residue polypeptide: Urease subunit gamma (100 aa).

The protein belongs to the urease gamma subunit family. As to quaternary structure, heterotrimer of UreA (gamma), UreB (beta) and UreC (alpha) subunits. Three heterotrimers associate to form the active enzyme.

It localises to the cytoplasm. It catalyses the reaction urea + 2 H2O + H(+) = hydrogencarbonate + 2 NH4(+). It participates in nitrogen metabolism; urea degradation; CO(2) and NH(3) from urea (urease route): step 1/1. This chain is Urease subunit gamma, found in Rhodococcus opacus (strain B4).